A 215-amino-acid polypeptide reads, in one-letter code: Pyridoxine/pyridoxamine 5'-phosphate oxidase (215 aa).

Residues 11–14 and Lys69 each bind substrate; that span reads RRDY. FMN-binding positions include 64 to 69, 79 to 80, Lys86, and Gln108; these read RVVLLK and YT. The substrate site is built by Tyr126, Arg130, and Ser134. FMN contacts are provided by residues 143 to 144 and Trp188; that span reads QS. 194-196 is a substrate binding site; the sequence is RLH. Arg198 provides a ligand contact to FMN.

The protein belongs to the pyridoxamine 5'-phosphate oxidase family. As to quaternary structure, homodimer. It depends on FMN as a cofactor.

The catalysed reaction is pyridoxamine 5'-phosphate + O2 + H2O = pyridoxal 5'-phosphate + H2O2 + NH4(+). It carries out the reaction pyridoxine 5'-phosphate + O2 = pyridoxal 5'-phosphate + H2O2. It functions in the pathway cofactor metabolism; pyridoxal 5'-phosphate salvage; pyridoxal 5'-phosphate from pyridoxamine 5'-phosphate: step 1/1. The protein operates within cofactor metabolism; pyridoxal 5'-phosphate salvage; pyridoxal 5'-phosphate from pyridoxine 5'-phosphate: step 1/1. Its function is as follows. Catalyzes the oxidation of either pyridoxine 5'-phosphate (PNP) or pyridoxamine 5'-phosphate (PMP) into pyridoxal 5'-phosphate (PLP). The protein is Pyridoxine/pyridoxamine 5'-phosphate oxidase of Legionella pneumophila (strain Paris).